The following is an 89-amino-acid chain: MKQDIHPNYQPVVFMDSTTGFKFLSGSTKGSSETVEWEDGNTYPLLRVEVTSDSHPFYTGRQKFTQADGRVDRFNKKYGLKDENANPDA.

It belongs to the bacterial ribosomal protein bL31 family. Type B subfamily. As to quaternary structure, part of the 50S ribosomal subunit.

This chain is Large ribosomal subunit protein bL31B, found in Enterococcus faecalis (strain ATCC 700802 / V583).